Consider the following 168-residue polypeptide: Photosystem I assembly protein Ycf3 (168 aa).

TPR repeat units follow at residues Ala-35 to Pro-68, Ser-72 to Leu-105, and Gly-120 to Asn-153.

The protein belongs to the Ycf3 family.

Its subcellular location is the plastid. It is found in the chloroplast thylakoid membrane. Its function is as follows. Essential for the assembly of the photosystem I (PSI) complex. May act as a chaperone-like factor to guide the assembly of the PSI subunits. This chain is Photosystem I assembly protein Ycf3, found in Phalaenopsis aphrodite subsp. formosana (Moth orchid).